The following is a 317-amino-acid chain: Egg-laying defective protein 26 (317 aa).

Residues 156–277 (EVNVSGVKFY…CSTGVPFSYD (122 aa)) form the LRAT domain. Residues H166 and H178 contribute to the active site. Catalysis depends on C261, which acts as the Acyl-thioester intermediate.

In terms of tissue distribution, highly expressed in the cells of the spermatheca, the mouth, and the lining of the pharynx, the rectum, and the excretory canal. Also expressed in the pharyngeal intestinal junction cell.

The protein resides in the apical cell membrane. In terms of biological role, putative acyltransferase. Plays a role in the morphogenesis of a vulval toroid cell, vulF, which is located where the vulva and the uterus connect. Not required for specifying vulval cell fate. This is Egg-laying defective protein 26 from Caenorhabditis elegans.